The chain runs to 333 residues: Uroporphyrinogen decarboxylase (333 aa).

Residues 21 to 25, D70, Y139, S194, and H309 each bind substrate; that span reads RQVGR.

This sequence belongs to the uroporphyrinogen decarboxylase family. Homodimer.

It localises to the cytoplasm. It catalyses the reaction uroporphyrinogen III + 4 H(+) = coproporphyrinogen III + 4 CO2. It participates in porphyrin-containing compound metabolism; protoporphyrin-IX biosynthesis; coproporphyrinogen-III from 5-aminolevulinate: step 4/4. Functionally, catalyzes the decarboxylation of four acetate groups of uroporphyrinogen-III to yield coproporphyrinogen-III. In Chlamydia abortus (strain DSM 27085 / S26/3) (Chlamydophila abortus), this protein is Uroporphyrinogen decarboxylase.